A 362-amino-acid chain; its full sequence is Probable cinnamyl alcohol dehydrogenase 9 (362 aa).

Cys-45 serves as a coordination point for Zn(2+). Residue Ser-47 participates in NADP(+) binding. 7 residues coordinate Zn(2+): His-67, Glu-68, Cys-98, Cys-101, Cys-104, Cys-112, and Cys-167. NADP(+) contacts are provided by residues Thr-171, 192–197 (GLGGLG), 215–220 (STSPWK), Thr-255, Gly-279, and 302–304 (SMI).

The protein belongs to the zinc-containing alcohol dehydrogenase family. In terms of assembly, homodimer. Requires Zn(2+) as cofactor.

The enzyme catalyses (E)-cinnamyl alcohol + NADP(+) = (E)-cinnamaldehyde + NADPH + H(+). It carries out the reaction (E)-coniferol + NADP(+) = (E)-coniferaldehyde + NADPH + H(+). The catalysed reaction is (E)-sinapyl alcohol + NADP(+) = (E)-sinapaldehyde + NADPH + H(+). It catalyses the reaction (E)-4-coumaroyl alcohol + NADP(+) = (E)-4-coumaraldehyde + NADPH + H(+). The enzyme catalyses (E)-caffeyl alcohol + NADP(+) = (E)-caffeyl aldehyde + NADPH + H(+). It participates in aromatic compound metabolism; phenylpropanoid biosynthesis. Functionally, involved in lignin biosynthesis. Catalyzes the final step specific for the production of lignin monomers. Catalyzes the NADPH-dependent reduction of coniferaldehyde, 5-hydroxyconiferaldehyde, sinapaldehyde, 4-coumaraldehyde and caffeyl aldehyde to their respective alcohols. The polypeptide is Probable cinnamyl alcohol dehydrogenase 9 (Oryza sativa subsp. japonica (Rice)).